Consider the following 172-residue polypeptide: Small ribosomal subunit protein uS5 (172 aa).

In terms of domain architecture, S5 DRBM spans 15 to 78; sequence LNDKLIFINR…ANAKRNLSRI (64 aa).

This sequence belongs to the universal ribosomal protein uS5 family. Part of the 30S ribosomal subunit. Contacts proteins S4 and S8.

Its function is as follows. With S4 and S12 plays an important role in translational accuracy. In terms of biological role, located at the back of the 30S subunit body where it stabilizes the conformation of the head with respect to the body. The sequence is that of Small ribosomal subunit protein uS5 from Dehalococcoides mccartyi (strain CBDB1).